Consider the following 176-residue polypeptide: Disulfide bond formation protein B (176 aa).

Residues 1–14 (MLRFLNRCSRGRGA) are Cytoplasmic-facing. A helical membrane pass occupies residues 15 to 31 (WLLLAFTALALELTALY). Residues 32-49 (FQHVMLLKPCVLCIYQRS) lie on the Periplasmic side of the membrane. C41 and C44 are joined by a disulfide. The helical transmembrane segment at 50–65 (ALWGVFAAGIVGAIAP) threads the bilayer. The Cytoplasmic portion of the chain corresponds to 66-71 (SSLLRY). The helical transmembrane segment at 72–89 (PAIALWIYSSYEGIRLAW) threads the bilayer. Topologically, residues 90–144 (KHTDILLNPSPFTTCDFFVSFPSWLPLDKWLPAIFNATGDCSERQWSFLSMEMPQ) are periplasmic. A disulfide bridge links C104 with C130. The chain crosses the membrane as a helical span at residues 145–163 (WLLGIFAAYLLIAVLVLIA). The Cytoplasmic segment spans residues 164–176 (QPFRSKRRDLFSR).

The protein belongs to the DsbB family.

It localises to the cell inner membrane. Its function is as follows. Required for disulfide bond formation in some periplasmic proteins. Acts by oxidizing the DsbA protein. The protein is Disulfide bond formation protein B of Pectobacterium atrosepticum (strain SCRI 1043 / ATCC BAA-672) (Erwinia carotovora subsp. atroseptica).